A 72-amino-acid polypeptide reads, in one-letter code: MGAKKNLLAELREKSSEELDEFIRDNKKALFTLRAEAALQNKAVKTHQFSLYKKSIARALTIKQEKKDRVHG.

This sequence belongs to the universal ribosomal protein uL29 family.

The sequence is that of Large ribosomal subunit protein uL29 (rpmC) from Chlamydia muridarum (strain MoPn / Nigg).